Here is a 385-residue protein sequence, read N- to C-terminus: Putative glutamate--cysteine ligase 2 (385 aa).

The protein belongs to the glutamate--cysteine ligase type 2 family. YbdK subfamily.

It catalyses the reaction L-cysteine + L-glutamate + ATP = gamma-L-glutamyl-L-cysteine + ADP + phosphate + H(+). Its function is as follows. ATP-dependent carboxylate-amine ligase which exhibits weak glutamate--cysteine ligase activity. This chain is Putative glutamate--cysteine ligase 2, found in Solibacter usitatus (strain Ellin6076).